The primary structure comprises 143 residues: Transcriptional regulator MraZ (143 aa).

SpoVT-AbrB domains lie at glutamate 5–glutamate 47 and alanine 76–arginine 119.

It belongs to the MraZ family. Forms oligomers.

The protein resides in the cytoplasm. It is found in the nucleoid. The sequence is that of Transcriptional regulator MraZ from Heliobacterium modesticaldum (strain ATCC 51547 / Ice1).